The sequence spans 318 residues: Ribose-phosphate pyrophosphokinase 3 (318 aa).

Position 96 to 101 (96 to 101) interacts with ATP; sequence RQDKKD. Mg(2+)-binding residues include D128, H130, D139, and D143. H130 contributes to the ATP binding site. The binding of phosphoribosylpyrophosphate stretch occupies residues 212–227; it reads NDRVAILVDDMADTCV.

This sequence belongs to the ribose-phosphate pyrophosphokinase family. Homodimer. The active form is probably a hexamer composed of 3 homodimers. Mg(2+) is required as a cofactor. In terms of tissue distribution, testis.

The catalysed reaction is D-ribose 5-phosphate + ATP = 5-phospho-alpha-D-ribose 1-diphosphate + AMP + H(+). Its pathway is metabolic intermediate biosynthesis; 5-phospho-alpha-D-ribose 1-diphosphate biosynthesis; 5-phospho-alpha-D-ribose 1-diphosphate from D-ribose 5-phosphate (route I): step 1/1. Activated by magnesium and inorganic phosphate. Functionally, catalyzes the synthesis of phosphoribosylpyrophosphate (PRPP) that is essential for nucleotide synthesis. In Homo sapiens (Human), this protein is Ribose-phosphate pyrophosphokinase 3 (PRPS1L1).